Consider the following 305-residue polypeptide: Aspartate carbamoyltransferase catalytic subunit (305 aa).

R52 and T53 together coordinate carbamoyl phosphate. Residue K80 coordinates L-aspartate. Carbamoyl phosphate contacts are provided by R102, H132, and Q135. L-aspartate-binding residues include R165 and R217. Positions 258 and 259 each coordinate carbamoyl phosphate.

This sequence belongs to the aspartate/ornithine carbamoyltransferase superfamily. ATCase family. In terms of assembly, heterododecamer (2C3:3R2) of six catalytic PyrB chains organized as two trimers (C3), and six regulatory PyrI chains organized as three dimers (R2).

The enzyme catalyses carbamoyl phosphate + L-aspartate = N-carbamoyl-L-aspartate + phosphate + H(+). Its pathway is pyrimidine metabolism; UMP biosynthesis via de novo pathway; (S)-dihydroorotate from bicarbonate: step 2/3. In terms of biological role, catalyzes the condensation of carbamoyl phosphate and aspartate to form carbamoyl aspartate and inorganic phosphate, the committed step in the de novo pyrimidine nucleotide biosynthesis pathway. The polypeptide is Aspartate carbamoyltransferase catalytic subunit (Latilactobacillus sakei subsp. sakei (strain 23K) (Lactobacillus sakei subsp. sakei)).